A 586-amino-acid polypeptide reads, in one-letter code: MQIIEITEPKQTDCQQKLQIAVGIDFGTTNSLIAIATNRKVNIIKSKGDKELIPTTIDFINEDLIIGNNKGLRSIKRLFGKTLKEILNTKTLFALVKDYLDINSSELKLNFANKKMRIAEIAAEVFIYLKNQAEKQLKNNITKAVITIPAHFNDTARGEIMLAAKIAGFEVLRLIAEPTAAAYAYGLNRNQTGRYLVYDLGGGTFDVSILNIQEGIFQVIATNGDNMLGGDDIDVVITQYICNKFDLPNSSETLQLAKKAKETLTYKESFNNDIISINKQTLEQLIFPLVKHTINITQECLEQSGNPNIDGVILVGGTTRIPLIKDELYKAFKINILSDIDPDKAVVCGAALQAENLIAPHTNSLLIDVVPLSLGIELYGGIVEKIIMRNTPIPIAVIKEFTTYADNQTGIQFHILQGEREMAADCRSLARFELKGLPPMKAGNIRAEVTFAIDADGILSISAYEKISNISHTIEVKPNHGIDKTEIEIMLENAYKNASIDYTTRLLQEEIIETEALISNIERSIIELTTLLSESEISIINALFDNIKYAVQTRDQTLIKHSIKEFKSKIKNIWIQNIININDLRK.

Belongs to the heat shock protein 70 family.

Chaperone involved in the maturation of iron-sulfur cluster-containing proteins. Has a low intrinsic ATPase activity which is markedly stimulated by HscB. The chain is Chaperone protein HscA homolog from Rickettsia typhi (strain ATCC VR-144 / Wilmington).